The primary structure comprises 31 residues: Photosystem II reaction center protein T (31 aa).

A helical membrane pass occupies residues 3 to 23 (ALVYTFLLVGTLGIIFFSIFF).

Belongs to the PsbT family. PSII is composed of 1 copy each of membrane proteins PsbA, PsbB, PsbC, PsbD, PsbE, PsbF, PsbH, PsbI, PsbJ, PsbK, PsbL, PsbM, PsbT, PsbY, PsbZ, Psb30/Ycf12, at least 3 peripheral proteins of the oxygen-evolving complex and a large number of cofactors. It forms dimeric complexes.

Its subcellular location is the plastid. The protein localises to the chloroplast thylakoid membrane. In terms of biological role, found at the monomer-monomer interface of the photosystem II (PS II) dimer, plays a role in assembly and dimerization of PSII. PSII is a light-driven water plastoquinone oxidoreductase, using light energy to abstract electrons from H(2)O, generating a proton gradient subsequently used for ATP formation. In Bigelowiella natans (Pedinomonas minutissima), this protein is Photosystem II reaction center protein T.